A 727-amino-acid chain; its full sequence is ABC transporter G family member 6 (727 aa).

Residues 68-333 (LSFTDLTYSV…FAEFGHPIPE (266 aa)) form the ABC transporter domain. ATP is bound at residue 126–133 (GASGSGKS). An ABC transmembrane type-2 domain is found at 421–631 (VELAVLAKRS…PYEAVLLNEF (211 aa)). Helical transmembrane passes span 440–460 (LFGI…TMFW), 475–495 (CFAF…PVFL), 517–537 (LSHS…FAAI), 560–580 (ASFW…PHVM), 581–601 (LGYT…GFFI), and 700–720 (LWVT…SLLL).

Belongs to the ABC transporter superfamily. ABCG family. Eye pigment precursor importer (TC 3.A.1.204) subfamily.

The protein resides in the membrane. The sequence is that of ABC transporter G family member 6 (ABCG6) from Arabidopsis thaliana (Mouse-ear cress).